Here is a 387-residue protein sequence, read N- to C-terminus: MTTSSPLIAIVAGEISGDILGAGLIKALKVHYPNARFIGVAGEKMLKEGCETLFDMEKLAVMGLAEVVRHLPRLLKRRKQVIDTMLALKPDIFIGIDAPDFNLGVEEKLKAQGIKTIHYVSPSVWAWRQNRVHKIASATDLVLAFLPFEKAFYDRFNVPCRFIGHTMADAIALQPNRQEACRLLQLDENQHYVAILVGSRGSEVNFLSEPFLKTAQLLKAQYPDVQFLVPLVNEKRREQFEAIKAQVAPELEVITLAGNARAAMMVAEATLLASGTAALEAMLCKSPMVVGYKMKPLTYWLAKRLVKTDYISLPNLLANEPLVPELIQADCSPENLAKHLSLYLSQMPEDVAKKNALKQRFMELHQYIQCDADAQAAQAVVDVLNRE.

This sequence belongs to the LpxB family.

The catalysed reaction is a lipid X + a UDP-2-N,3-O-bis[(3R)-3-hydroxyacyl]-alpha-D-glucosamine = a lipid A disaccharide + UDP + H(+). Its pathway is bacterial outer membrane biogenesis; LPS lipid A biosynthesis. Its function is as follows. Condensation of UDP-2,3-diacylglucosamine and 2,3-diacylglucosamine-1-phosphate to form lipid A disaccharide, a precursor of lipid A, a phosphorylated glycolipid that anchors the lipopolysaccharide to the outer membrane of the cell. The chain is Lipid-A-disaccharide synthase from Glaesserella parasuis serovar 5 (strain SH0165) (Haemophilus parasuis).